Consider the following 105-residue polypeptide: Small ribosomal subunit protein uS10 (105 aa).

It belongs to the universal ribosomal protein uS10 family. Part of the 30S ribosomal subunit.

Involved in the binding of tRNA to the ribosomes. The polypeptide is Small ribosomal subunit protein uS10 (Aster yellows witches'-broom phytoplasma (strain AYWB)).